A 175-amino-acid polypeptide reads, in one-letter code: ATP synthase subunit delta (175 aa).

Belongs to the ATPase delta chain family. In terms of assembly, F-type ATPases have 2 components, F(1) - the catalytic core - and F(0) - the membrane proton channel. F(1) has five subunits: alpha(3), beta(3), gamma(1), delta(1), epsilon(1). F(0) has three main subunits: a(1), b(2) and c(10-14). The alpha and beta chains form an alternating ring which encloses part of the gamma chain. F(1) is attached to F(0) by a central stalk formed by the gamma and epsilon chains, while a peripheral stalk is formed by the delta and b chains.

Its subcellular location is the cell inner membrane. Functionally, f(1)F(0) ATP synthase produces ATP from ADP in the presence of a proton or sodium gradient. F-type ATPases consist of two structural domains, F(1) containing the extramembraneous catalytic core and F(0) containing the membrane proton channel, linked together by a central stalk and a peripheral stalk. During catalysis, ATP synthesis in the catalytic domain of F(1) is coupled via a rotary mechanism of the central stalk subunits to proton translocation. This protein is part of the stalk that links CF(0) to CF(1). It either transmits conformational changes from CF(0) to CF(1) or is implicated in proton conduction. In Stenotrophomonas maltophilia (strain R551-3), this protein is ATP synthase subunit delta.